Here is a 416-residue protein sequence, read N- to C-terminus: MQYMKSLAHPDEFLSLLKIGYTESFKPKSQLKENLGNKEWCYELLNKTSRSFAFVINELEPSLKDAICIFYLVLRGLDTIEDDTTVELNTKLPVLTSFSEGLYQPGYKVFGYGMNNDEKNLVENFDKVVDVFLGLGDGYCTIIHDITRRMANGMSEFLQKSVVTLPEWDLYCHYVAGLVGIGLSKIFHASGLESEWFATADDESNQMGLFLQKTNIIRDYLEDINEKRIFWPRDVWARYTLHLENFKEAKYQIPALHCLNDLITNALSHALIALDYMSRLKNPQVINFCAIPQVMAIGTLNACYNNYNVFTGVVKIRKGQRALIVDAIQSKGLTATYELFFKFANEMRHKVPPNDPSAKKTIQHLESIEKLCIEKLGYRPSGFNDFISYDWMAVTSLAVSSAFLIARHGPNFFSKL.

2 helical membrane passes run 285-304 (VINF…NACY) and 386-406 (FISY…FLIA).

This sequence belongs to the phytoene/squalene synthase family. Mg(2+) serves as cofactor.

Its subcellular location is the endoplasmic reticulum membrane. It carries out the reaction 2 (2E,6E)-farnesyl diphosphate + NADPH + H(+) = squalene + 2 diphosphate + NADP(+). The enzyme catalyses 2 (2E,6E)-farnesyl diphosphate + NADH + H(+) = squalene + 2 diphosphate + NAD(+). The protein operates within terpene metabolism; lanosterol biosynthesis; lanosterol from farnesyl diphosphate: step 1/3. In Dictyostelium discoideum (Social amoeba), this protein is Squalene synthase (fdfT).